The following is a 764-amino-acid chain: 5-methyltetrahydropteroyltriglutamate--homocysteine methyltransferase (764 aa).

5-methyltetrahydropteroyltri-L-glutamate is bound by residues 16–19 (RELK) and K121. Residues 440 to 442 (IGS) and E493 each bind L-homocysteine. Residues 440-442 (IGS) and E493 contribute to the L-methionine site. 5-methyltetrahydropteroyltri-L-glutamate is bound by residues 524-525 (RC) and W570. Residue D608 participates in L-homocysteine binding. L-methionine is bound at residue D608. A 5-methyltetrahydropteroyltri-L-glutamate-binding site is contributed by E614. Zn(2+) is bound by residues H650, C652, and E674. Residue H703 is the Proton donor of the active site. A Zn(2+)-binding site is contributed by C735.

Belongs to the vitamin-B12 independent methionine synthase family. It depends on Zn(2+) as a cofactor.

The catalysed reaction is 5-methyltetrahydropteroyltri-L-glutamate + L-homocysteine = tetrahydropteroyltri-L-glutamate + L-methionine. The protein operates within amino-acid biosynthesis; L-methionine biosynthesis via de novo pathway; L-methionine from L-homocysteine (MetE route): step 1/1. Catalyzes the transfer of a methyl group from 5-methyltetrahydrofolate to homocysteine resulting in methionine formation. This Burkholderia cenocepacia (strain HI2424) protein is 5-methyltetrahydropteroyltriglutamate--homocysteine methyltransferase.